An 898-amino-acid chain; its full sequence is Serine/threonine-protein kinase TAO3 (898 aa).

Positions phenylalanine 24–isoleucine 277 constitute a Protein kinase domain. ATP is bound by residues isoleucine 30–valine 38 and lysine 53. Aspartate 147 functions as the Proton acceptor in the catalytic mechanism. 2 disordered regions span residues threonine 316–aspartate 372 and aspartate 405–serine 424. Residues serine 324, serine 331, serine 343, serine 346, and serine 349 each carry the phosphoserine modification. The segment covering serine 349–serine 366 has biased composition (low complexity). Threonine 357 is modified (phosphothreonine). Serine 359 is modified (phosphoserine). The span at aspartate 405–proline 416 shows a compositional bias: basic and acidic residues. Residue serine 442 is modified to Phosphoserine. Coiled-coil stretches lie at residues glutamate 452–asparagine 502, phenylalanine 548–leucine 649, and isoleucine 753–glutamate 871. Residues glutamate 565–glutamate 596 are disordered. Lysine 830 is subject to N6-acetyllysine.

The protein belongs to the protein kinase superfamily. STE Ser/Thr protein kinase family. STE20 subfamily. As to quaternary structure, self-associates. Interacts with ERN1 and TRAF2. Interaction with TRAF2 is facilitated under ER stress conditions, such as treatment with tunicamycin, and may promote TRAF2 phosphorylation. Interacts (via N-terminus) with STK25; the interaction promotes STK25 abundance at the level of protein expression and/or stability. Post-translationally, autophosphorylated. Phosphorylation at Ser-324 by ATM following DNA damage is required for activation of the p38/MAPK14 stress-activated MAPK cascade. Phosphorylated at Ser-324 and on Tyr residues during T cell activation. Phosphorylated by LRRK2. Ubiquitously expressed, with a higher expression in the retina.

It localises to the cytoplasm. The protein resides in the cell membrane. Its subcellular location is the membrane raft. The protein localises to the lipid droplet. The catalysed reaction is L-seryl-[protein] + ATP = O-phospho-L-seryl-[protein] + ADP + H(+). It catalyses the reaction L-threonyl-[protein] + ATP = O-phospho-L-threonyl-[protein] + ADP + H(+). Its function is as follows. Serine/threonine-protein kinase that acts as a regulator of the p38/MAPK14 stress-activated MAPK cascade and of the MAPK8/JNK cascade. In response to DNA damage, involved in the G2/M transition DNA damage checkpoint by activating the p38/MAPK14 stress-activated MAPK cascade, probably by mediating phosphorylation of upstream MAP2K3 and MAP2K6 kinases. Inhibits basal activity of the MAPK8/JNK cascade and diminishes its activation in response to epidermal growth factor (EGF). Positively regulates canonical T cell receptor (TCR) signaling by preventing early PTPN6/SHP1-mediated inactivation of LCK, ensuring sustained TCR signaling that is required for optimal activation and differentiation of T cells. Phosphorylates PTPN6/SHP1 on 'Thr-396', leading to its polyubiquitination and subsequent proteasomal degradation. Required for cell surface expression of metalloprotease ADAM10 on type 1 transitional B cells which is necessary for their NOTCH-mediated development into marginal zone B cells. Also required for the NOTCH-mediated terminal differentiation of splenic conventional type 2 dendritic cells. Positively regulates osteoblast differentiation by acting as an upstream activator of the JNK pathway. Promotes JNK signaling in hepatocytes and positively regulates hepatocyte lipid storage by inhibiting beta-oxidation and triacylglycerol secretion while enhancing lipid synthesis. Restricts age-associated inflammation by negatively regulating differentiation of macrophages and their production of pro-inflammatory cytokines. Plays a role in negatively regulating the abundance of regulatory T cells in white adipose tissue. The chain is Serine/threonine-protein kinase TAO3 (Taok3) from Rattus norvegicus (Rat).